The following is a 281-amino-acid chain: NADPH-dependent 7-cyano-7-deazaguanine reductase (281 aa).

Position 87–89 (87–89 (IES)) interacts with substrate. 89–90 (SK) lines the NADPH pocket. The active-site Thioimide intermediate is the Cys188. Residue Asp195 is the Proton donor of the active site. 227 to 228 (HE) is a binding site for substrate. 256–257 (RG) lines the NADPH pocket. Positions 261–281 (INPYRSTEQDKPAHNNRMARQ) are disordered.

Belongs to the GTP cyclohydrolase I family. QueF type 2 subfamily. As to quaternary structure, homodimer.

The protein localises to the cytoplasm. It catalyses the reaction 7-aminomethyl-7-carbaguanine + 2 NADP(+) = 7-cyano-7-deazaguanine + 2 NADPH + 3 H(+). It functions in the pathway tRNA modification; tRNA-queuosine biosynthesis. Its function is as follows. Catalyzes the NADPH-dependent reduction of 7-cyano-7-deazaguanine (preQ0) to 7-aminomethyl-7-deazaguanine (preQ1). The sequence is that of NADPH-dependent 7-cyano-7-deazaguanine reductase from Vibrio campbellii (strain ATCC BAA-1116).